The sequence spans 314 residues: Methionyl-tRNA formyltransferase (314 aa).

110–113 (SLLP) contributes to the (6S)-5,6,7,8-tetrahydrofolate binding site.

It belongs to the Fmt family.

It carries out the reaction L-methionyl-tRNA(fMet) + (6R)-10-formyltetrahydrofolate = N-formyl-L-methionyl-tRNA(fMet) + (6S)-5,6,7,8-tetrahydrofolate + H(+). Functionally, attaches a formyl group to the free amino group of methionyl-tRNA(fMet). The formyl group appears to play a dual role in the initiator identity of N-formylmethionyl-tRNA by promoting its recognition by IF2 and preventing the misappropriation of this tRNA by the elongation apparatus. In Bacillus cereus (strain ATCC 14579 / DSM 31 / CCUG 7414 / JCM 2152 / NBRC 15305 / NCIMB 9373 / NCTC 2599 / NRRL B-3711), this protein is Methionyl-tRNA formyltransferase.